Here is a 293-residue protein sequence, read N- to C-terminus: tRNA-cytidine(32) 2-sulfurtransferase (293 aa).

Residues 62-67 carry the PP-loop motif motif; it reads SGGKDS. Residues cysteine 137, cysteine 140, and cysteine 228 each coordinate [4Fe-4S] cluster.

The protein belongs to the TtcA family. Homodimer. Requires Mg(2+) as cofactor. It depends on [4Fe-4S] cluster as a cofactor.

Its subcellular location is the cytoplasm. It carries out the reaction cytidine(32) in tRNA + S-sulfanyl-L-cysteinyl-[cysteine desulfurase] + AH2 + ATP = 2-thiocytidine(32) in tRNA + L-cysteinyl-[cysteine desulfurase] + A + AMP + diphosphate + H(+). Its pathway is tRNA modification. In terms of biological role, catalyzes the ATP-dependent 2-thiolation of cytidine in position 32 of tRNA, to form 2-thiocytidine (s(2)C32). The sulfur atoms are provided by the cysteine/cysteine desulfurase (IscS) system. This Brucella suis (strain ATCC 23445 / NCTC 10510) protein is tRNA-cytidine(32) 2-sulfurtransferase.